We begin with the raw amino-acid sequence, 88 residues long: Cell division topological specificity factor (88 aa).

Belongs to the MinE family.

Functionally, prevents the cell division inhibition by proteins MinC and MinD at internal division sites while permitting inhibition at polar sites. This ensures cell division at the proper site by restricting the formation of a division septum at the midpoint of the long axis of the cell. This chain is Cell division topological specificity factor, found in Psychromonas ingrahamii (strain DSM 17664 / CCUG 51855 / 37).